Here is a 149-residue protein sequence, read N- to C-terminus: Thioredoxin-like protein 4B (149 aa).

The protein belongs to the DIM1 family. As to quaternary structure, homodimer. Interacts with the U5-102 kDa protein subunit of the spliceosome.

Its subcellular location is the nucleus. In terms of biological role, essential role in pre-mRNA splicing. Required in cell cycle progression for S/G(2) transition. The protein is Thioredoxin-like protein 4B (Txnl4b) of Mus musculus (Mouse).